The primary structure comprises 122 residues: ATP-dependent Clp protease adapter protein ClpS (122 aa).

Residues 1 to 33 (MHAPSQIRLTFNQDHPEPHEHEDEGAGLAVQES) form a disordered region. A compositionally biased stretch (basic and acidic residues) spans 14–24 (DHPEPHEHEDE).

Belongs to the ClpS family. In terms of assembly, binds to the N-terminal domain of the chaperone ClpA.

In terms of biological role, involved in the modulation of the specificity of the ClpAP-mediated ATP-dependent protein degradation. The sequence is that of ATP-dependent Clp protease adapter protein ClpS from Pseudomonas aeruginosa (strain ATCC 15692 / DSM 22644 / CIP 104116 / JCM 14847 / LMG 12228 / 1C / PRS 101 / PAO1).